The sequence spans 118 residues: Large ribosomal subunit protein bL20 (118 aa).

Belongs to the bacterial ribosomal protein bL20 family.

Functionally, binds directly to 23S ribosomal RNA and is necessary for the in vitro assembly process of the 50S ribosomal subunit. It is not involved in the protein synthesizing functions of that subunit. This is Large ribosomal subunit protein bL20 from Thermotoga neapolitana (strain ATCC 49049 / DSM 4359 / NBRC 107923 / NS-E).